The chain runs to 126 residues: Holo-[acyl-carrier-protein] synthase (126 aa).

Mg(2+) contacts are provided by aspartate 8 and glutamate 57.

It belongs to the P-Pant transferase superfamily. AcpS family. The cofactor is Mg(2+).

Its subcellular location is the cytoplasm. It carries out the reaction apo-[ACP] + CoA = holo-[ACP] + adenosine 3',5'-bisphosphate + H(+). Functionally, transfers the 4'-phosphopantetheine moiety from coenzyme A to a Ser of acyl-carrier-protein. This chain is Holo-[acyl-carrier-protein] synthase, found in Geobacter sulfurreducens (strain ATCC 51573 / DSM 12127 / PCA).